A 3590-amino-acid polypeptide reads, in one-letter code: Filamentous hemagglutinin (3590 aa).

Disordered stretches follow at residues 3256-3309 (GGGS…VEVS) and 3417-3498 (APPP…GRHV). The span at 3289–3299 (PSRPTTPPASP) shows a compositional bias: pro residues. Residues 3300–3309 (QPIRATVEVS) show a composition bias toward low complexity. Residues 3417-3432 (APPPVVETAQPLPPVK) are compositionally biased toward pro residues.

Its subcellular location is the cell surface. In terms of biological role, evidence for a role in host-cell binding and infection. The polypeptide is Filamentous hemagglutinin (fhaB) (Bordetella pertussis (strain Tohama I / ATCC BAA-589 / NCTC 13251)).